The following is a 1001-amino-acid chain: Ribonuclease E/G-like protein, chloroplastic (1001 aa).

The transit peptide at 1 to 48 (MDVTEVPWRRLPQFSVSSRASWLVSSGFPLSSYMFSHVERGKTFRLTL) directs the protein to the chloroplast. Positions 76–185 (SRLKGLCEVV…KIIIRDSWMS (110 aa)) constitute a CBM20 domain. D755 contacts Mg(2+). Residues 769 to 789 (QEKAILEVNLAAARQIAREIR) adopt a coiled-coil conformation. D800 is a Mg(2+) binding site. Positions 858 and 861 each coordinate Zn(2+).

Belongs to the RNase E/G family. In terms of assembly, part of a chloroplastic degradosome-like complex. Interacts with RHON1. A homotetramer formed by a dimer of dimers. It depends on Mg(2+) as a cofactor. Zn(2+) is required as a cofactor. As to expression, expressed in cotyledons, rosette and cauline leaves.

It is found in the plastid. The protein localises to the chloroplast stroma. Functionally, involved in intercistronic processing of primary transcripts from chloroplast operons. The endonucleolytic activity of the enzyme depends on the number of phosphates at the 5' end, is inhibited by structured RNA, and preferentially cleaves A/U-rich sequences. The polypeptide is Ribonuclease E/G-like protein, chloroplastic (RNE) (Arabidopsis thaliana (Mouse-ear cress)).